The following is a 263-amino-acid chain: uncharacterized protein (263 aa).

Residues 72–168 are a coiled coil; that stretch reads LDKKETKELS…RTIVEIRNTK (97 aa). The segment at 76–158 is disordered; that stretch reads ETKELSKKEK…EKKEKKEKED (83 aa). Residues 83–95 show a composition bias toward basic residues; it reads KEKKQLKKEKKAL. Residues 96–107 are compositionally biased toward basic and acidic residues; the sequence is KKENKGGKDKKD. A compositionally biased stretch (basic residues) spans 108–121; that stretch reads KKDKKDKKDKKDKK. Composition is skewed to basic and acidic residues over residues 122–131 and 139–158; these read DKKDKGDKKD and KHDD…EKED.

This is an uncharacterized protein from Dictyostelium discoideum (Social amoeba).